The following is a 333-amino-acid chain: Squamosa promoter-binding-like protein 8 (333 aa).

Residues 1–28 (MLDYEWDNPSSIVLSGDERNPDSDPTRS) form a disordered region. Basic and acidic residues predominate over residues 16-25 (GDERNPDSDP). The interval 179–269 (MANSLSTPRC…RKCHQSASAT (91 aa)) is sufficient and necessary for DNA binding. The SBP-type zinc-finger motif lies at 185-262 (TPRCQAEGCN…ADHNRRRRKC (78 aa)). Positions 188, 193, 210, 213, 229, 232, 236, and 248 each coordinate Zn(2+). Positions 245-261 (KRSCRKRLADHNRRRRK) match the Bipartite nuclear localization signal motif. Disordered regions lie at residues 254-303 (DHNR…TISL) and 314-333 (TASS…FSSG). Residues 264-284 (QSASATQDTGTGKTTPKSPND) are compositionally biased toward polar residues. Low complexity predominate over residues 289 to 299 (ASSSPSSNAPP).

Requires Zn(2+) as cofactor. In terms of tissue distribution, expressed in shoot apical region and early floral tissues. Transcripts levels increase in developing pollen sacs, and decrease in later stage of anther development. Strongly expressed in the placental region of the carpels.

It is found in the nucleus. The protein localises to the cytoplasm. Functionally, trans-acting factor that binds specifically to the consensus nucleotide sequence 5'-TNCGTACAA-3'. Binds specifically to the 5'-GTAC-3' core sequence. Involved in development and floral organogenesis. Required for ovule differentiation, pollen production, filament elongation, seed formation and siliques elongation. Also seems to play a role in the formation of trichomes on sepals. May positively modulate gibberellin (GA) signaling in flower. The polypeptide is Squamosa promoter-binding-like protein 8 (SPL8) (Arabidopsis thaliana (Mouse-ear cress)).